The chain runs to 543 residues: Probable protein kinase UbiB (543 aa).

A Protein kinase domain is found at 123 to 500 (DFDQQPLASA…HRRHAQARFL (378 aa)). Residues 129–137 (LASASVAQV) and Lys-152 contribute to the ATP site. The active-site Proton acceptor is Asp-286. 2 helical membrane-spanning segments follow: residues 499–519 (FLLG…PTHE) and 521–541 (LASA…WKIS).

The protein belongs to the ABC1 family. UbiB subfamily.

The protein resides in the cell inner membrane. It participates in cofactor biosynthesis; ubiquinone biosynthesis [regulation]. Is probably a protein kinase regulator of UbiI activity which is involved in aerobic coenzyme Q (ubiquinone) biosynthesis. This is Probable protein kinase UbiB from Tolumonas auensis (strain DSM 9187 / NBRC 110442 / TA 4).